A 310-amino-acid chain; its full sequence is HMG box-containing protein C28F2.11 (310 aa).

A compositionally biased stretch (low complexity) spans 69–95; sequence ESPSKKATSPKKATPAAVAPVEATSAV. Residues 69 to 310 form a disordered region; that stretch reads ESPSKKATSP…TTPPTAKVAN (242 aa). S70 carries the phosphoserine modification. T105 is subject to Phosphothreonine. The segment at residues 117-187 is a DNA-binding region (HMG box); sequence PKRPPSAYNL…AYEEEMAAYN (71 aa). Composition is skewed to basic and acidic residues over residues 131–178 and 200–226; these read QRSE…LREA and VTAE…DFSE. Phosphoserine is present on residues S161, S214, and S215. A phosphothreonine mark is found at T217 and T237. Residues 255–268 are compositionally biased toward polar residues; sequence STVPTSNVEPVSQP. Phosphoserine is present on residues S271, S278, S294, S295, and S297. T302 and T305 each carry phosphothreonine.

It localises to the cytoplasm. The protein is HMG box-containing protein C28F2.11 of Schizosaccharomyces pombe (strain 972 / ATCC 24843) (Fission yeast).